We begin with the raw amino-acid sequence, 226 residues long: UPF0502 protein Gbem_0194 (226 aa).

It belongs to the UPF0502 family.

The chain is UPF0502 protein Gbem_0194 from Citrifermentans bemidjiense (strain ATCC BAA-1014 / DSM 16622 / JCM 12645 / Bem) (Geobacter bemidjiensis).